The chain runs to 954 residues: Glycine dehydrogenase (decarboxylating) (954 aa).

At lysine 706 the chain carries N6-(pyridoxal phosphate)lysine.

This sequence belongs to the GcvP family. In terms of assembly, the glycine cleavage system is composed of four proteins: P, T, L and H. Pyridoxal 5'-phosphate serves as cofactor.

It carries out the reaction N(6)-[(R)-lipoyl]-L-lysyl-[glycine-cleavage complex H protein] + glycine + H(+) = N(6)-[(R)-S(8)-aminomethyldihydrolipoyl]-L-lysyl-[glycine-cleavage complex H protein] + CO2. Its function is as follows. The glycine cleavage system catalyzes the degradation of glycine. The P protein binds the alpha-amino group of glycine through its pyridoxal phosphate cofactor; CO(2) is released and the remaining methylamine moiety is then transferred to the lipoamide cofactor of the H protein. The sequence is that of Glycine dehydrogenase (decarboxylating) from Pseudomonas syringae pv. syringae (strain B728a).